The primary structure comprises 668 residues: DNA ligase (668 aa).

Residues 37-41 (DAVYD), 86-87 (SM), and glutamate 116 each bind NAD(+). Lysine 118 functions as the N6-AMP-lysine intermediate in the catalytic mechanism. Residues arginine 139, glutamate 173, lysine 288, and lysine 312 each contribute to the NAD(+) site. Residues cysteine 406, cysteine 409, cysteine 424, and cysteine 429 each contribute to the Zn(2+) site. The region spanning 590–668 (APDNFFKEKT…EQEAIAKIEK (79 aa)) is the BRCT domain.

Belongs to the NAD-dependent DNA ligase family. LigA subfamily. The cofactor is Mg(2+). Mn(2+) serves as cofactor.

It carries out the reaction NAD(+) + (deoxyribonucleotide)n-3'-hydroxyl + 5'-phospho-(deoxyribonucleotide)m = (deoxyribonucleotide)n+m + AMP + beta-nicotinamide D-nucleotide.. DNA ligase that catalyzes the formation of phosphodiester linkages between 5'-phosphoryl and 3'-hydroxyl groups in double-stranded DNA using NAD as a coenzyme and as the energy source for the reaction. It is essential for DNA replication and repair of damaged DNA. The chain is DNA ligase from Lactobacillus gasseri (strain ATCC 33323 / DSM 20243 / BCRC 14619 / CIP 102991 / JCM 1131 / KCTC 3163 / NCIMB 11718 / NCTC 13722 / AM63).